The following is a 151-amino-acid chain: Deoxyuridine 5'-triphosphate nucleotidohydrolase (151 aa).

Residues arginine 70–glycine 72, asparagine 83, leucine 87–aspartate 89, and methionine 97 contribute to the substrate site.

It belongs to the dUTPase family. In terms of assembly, homotrimer. It depends on Mg(2+) as a cofactor.

The catalysed reaction is dUTP + H2O = dUMP + diphosphate + H(+). The protein operates within pyrimidine metabolism; dUMP biosynthesis; dUMP from dCTP (dUTP route): step 2/2. In terms of biological role, this enzyme is involved in nucleotide metabolism: it produces dUMP, the immediate precursor of thymidine nucleotides and it decreases the intracellular concentration of dUTP so that uracil cannot be incorporated into DNA. This is Deoxyuridine 5'-triphosphate nucleotidohydrolase from Escherichia coli O7:K1 (strain IAI39 / ExPEC).